The following is a 155-amino-acid chain: Ribosomal RNA large subunit methyltransferase H (155 aa).

S-adenosyl-L-methionine is bound by residues Leu72, Gly104, and 123-128; that span reads LSKMTF.

The protein belongs to the RNA methyltransferase RlmH family. In terms of assembly, homodimer.

It is found in the cytoplasm. It carries out the reaction pseudouridine(1915) in 23S rRNA + S-adenosyl-L-methionine = N(3)-methylpseudouridine(1915) in 23S rRNA + S-adenosyl-L-homocysteine + H(+). Functionally, specifically methylates the pseudouridine at position 1915 (m3Psi1915) in 23S rRNA. This is Ribosomal RNA large subunit methyltransferase H from Cytophaga hutchinsonii (strain ATCC 33406 / DSM 1761 / CIP 103989 / NBRC 15051 / NCIMB 9469 / D465).